Here is a 265-residue protein sequence, read N- to C-terminus: Acetylglutamate kinase (265 aa).

Substrate contacts are provided by residues G41–G42, R63, and N156.

The protein belongs to the acetylglutamate kinase family. ArgB subfamily.

The protein localises to the cytoplasm. The catalysed reaction is N-acetyl-L-glutamate + ATP = N-acetyl-L-glutamyl 5-phosphate + ADP. Its pathway is amino-acid biosynthesis; L-arginine biosynthesis; N(2)-acetyl-L-ornithine from L-glutamate: step 2/4. Catalyzes the ATP-dependent phosphorylation of N-acetyl-L-glutamate. In Brevibacillus brevis (strain 47 / JCM 6285 / NBRC 100599), this protein is Acetylglutamate kinase.